A 1122-amino-acid chain; its full sequence is Desmoglein-2 (1122 aa).

The N-terminal stretch at 1 to 28 is a signal peptide; it reads MARSPGDRCALLLLVQLLAVVCLDFGNG. Positions 29–54 are excised as a propeptide; it reads LHLEVFSPRNEGKPFPKHTHLVRQKR. Cadherin domains are found at residues 55–164, 165–277, 278–398, and 397–504; these read AWIT…EPVF, TQEV…IPVV, ENKM…SSVV, and VVSF…CPVL. Residues 55–618 lie on the Extracellular side of the membrane; it reads AWITAPVALR…YDNYVGLGPA (564 aa). Asparagine 117 is a glycosylation site (N-linked (GlcNAc...) asparagine). N-linked (GlcNAc...) asparagine glycans are attached at residues asparagine 314, asparagine 467, and asparagine 519. Residues 619-639 traverse the membrane as a helical segment; that stretch reads AIALMILALLLLLLVPLLLLI. Residues 640–1122 are Cytoplasmic-facing; the sequence is CHCGGGAKGF…KHSTMQHSYS (483 aa). Phosphoserine is present on residues serine 685, serine 706, serine 709, and serine 729. Threonine 808 carries the post-translational modification Phosphothreonine. Phosphoserine is present on residues serine 810, serine 814, and serine 819. Desmoglein repeat repeat units follow at residues 885–916, 917–945, 946–971, 972–995, 996–1024, and 1025–1055; these read AYSS…ESSV, SSRQ…SYAK, GSAV…ERVY, APTS…ERVI, QPNG…ERES, and ILAP…ERIL. Residues 913–932 are disordered; it reads ESSVSSRQSQKVVPPPDPVA. Residues 914–924 show a composition bias toward low complexity; sequence SSVSSRQSQKV. Residues 1089–1122 form a disordered region; that stretch reads LPNLDLEESDRPNSTITTSSTRVTKHSTMQHSYS. Polar residues predominate over residues 1100–1122; the sequence is PNSTITTSSTRVTKHSTMQHSYS. Serine 1122 is modified (phosphoserine).

In terms of assembly, interacts with PKP2. Interacts with CTNNB1; the interaction promotes localization of CTNNB1 at cell junctions thus reducing its nuclear localization and subsequent transcription of CTNNB1/TCF-target genes. In terms of processing, palmitoylated by ZDHHC5 at the plasma membrane. As to expression, expressed in undifferentiated pluripotent stem cells, expression decreases during differentiation (at protein level). Expressed by embryonic stem cells, expression is reduced during differentiation (at protein level). Expressed at the apical-lateral cell membrane of kidney tubular epithelial cells (at protein level). Expressed in epidermis and heart (at protein level). Expressed in the brain, spleen, lung, liver skeletal muscle, kidney and testis.

The protein resides in the cell membrane. It is found in the cell junction. Its subcellular location is the desmosome. The protein localises to the cytoplasm. In terms of biological role, a component of desmosome cell-cell junctions which are required for positive regulation of cellular adhesion. Involved in the interaction of plaque proteins and intermediate filaments mediating cell-cell adhesion. Required for proliferation and viability of embryonic stem cells in the blastocyst, thereby crucial for progression of post-implantation embryonic development. Maintains pluripotency by regulating epithelial to mesenchymal transition/mesenchymal to epithelial transition (EMT/MET) via interacting with and sequestering CTNNB1 to sites of cell-cell contact, thereby reducing translocation of CTNNB1 to the nucleus and subsequent transcription of CTNNB1/TCF-target genes. Promotes pluripotency and the multi-lineage differentiation potential of hematopoietic stem cells. Plays a role in endothelial cell sprouting and elongation via mediating the junctional-association of cortical actin fibers and CDH5. Plays a role in limiting inflammatory infiltration and the apoptotic response to injury in kidney tubular epithelial cells, potentially via its role in maintaining cell-cell adhesion and the epithelial barrier. This is Desmoglein-2 (Dsg2) from Mus musculus (Mouse).